A 308-amino-acid polypeptide reads, in one-letter code: HPr kinase/phosphorylase (308 aa).

Residues His-138 and Lys-159 contribute to the active site. 153 to 160 lines the ATP pocket; the sequence is GESGLGKS. Ser-160 provides a ligand contact to Mg(2+). The active-site Proton acceptor; for phosphorylation activity. Proton donor; for dephosphorylation activity is Asp-177. The tract at residues 201–210 is important for the catalytic mechanism of both phosphorylation and dephosphorylation; it reads LEVRGLGLLD. Residue Glu-202 coordinates Mg(2+). Residue Arg-243 is part of the active site. The important for the catalytic mechanism of dephosphorylation stretch occupies residues 264–269; that stretch reads QVAAGR.

This sequence belongs to the HPrK/P family. Homohexamer. Mg(2+) is required as a cofactor.

The catalysed reaction is [HPr protein]-L-serine + ATP = [HPr protein]-O-phospho-L-serine + ADP + H(+). The enzyme catalyses [HPr protein]-O-phospho-L-serine + phosphate + H(+) = [HPr protein]-L-serine + diphosphate. In terms of biological role, catalyzes the ATP- as well as the pyrophosphate-dependent phosphorylation of a specific serine residue in HPr, a phosphocarrier protein of the phosphoenolpyruvate-dependent sugar phosphotransferase system (PTS). HprK/P also catalyzes the pyrophosphate-producing, inorganic phosphate-dependent dephosphorylation (phosphorolysis) of seryl-phosphorylated HPr (P-Ser-HPr). In Bordetella petrii (strain ATCC BAA-461 / DSM 12804 / CCUG 43448), this protein is HPr kinase/phosphorylase.